We begin with the raw amino-acid sequence, 1135 residues long: APC membrane recruitment protein 1 (1135 aa).

Residue Met-1 is modified to N-acetylmethionine. Disordered stretches follow at residues 1–115 (METQ…EGTG), 156–308 (AEKF…VGDP), 339–405 (SMTD…EDDD), 447–484 (GLAP…DDSG), 736–764 (NFGG…KEGN), 921–948 (LQAQ…PLSL), and 1007–1135 (VPES…NLAK). Residues 10–19 (QAKGAAASGS) are compositionally biased toward low complexity. Positions 23-35 (QTAEKGAKNKAAE) are enriched in basic and acidic residues. Over residues 36-50 (ATEGPTSEPSSSGPG) the composition is skewed to low complexity. Positions 73–83 (FGGGRSKGSGK) are enriched in gly residues. Composition is skewed to basic and acidic residues over residues 94 to 107 (KTHD…HGPE) and 196 to 208 (GPER…HEHV). The segment covering 238–248 (KVSPTPEPSPP) has biased composition (pro residues). At Ser-246 the chain carries Phosphoserine. 2 stretches are compositionally biased toward basic and acidic residues: residues 253 to 262 (MACKDPEKPM) and 282 to 291 (EEPHSPETGE). A compositionally biased stretch (acidic residues) spans 373-405 (ALPDDDDEEEEEEEEVELEEEEEEVKEEEEDDD). The span at 455–466 (TPQSDQQESAPN) shows a compositional bias: polar residues. The span at 926 to 938 (EDSDEEDEEEEEG) shows a compositional bias: acidic residues. Residues 1058-1069 (PSCSSSSGGFSP) show a composition bias toward low complexity. Positions 1119 to 1135 (SLATSYSSTAMNGNLAK) are enriched in polar residues.

It belongs to the Amer family. As to quaternary structure, interacts with CTNNB1, AXIN1, LRP6, KEAP1, APC and BTRC. Interacts with SCF (SKP1-CUL1-F-box protein) E3 ubiquitin-protein ligase complexes containing BTRC and/or FBXW11. Identified in the beta-catenin destruction complex containing CTNNB1, APC, AXIN1 and AXIN2. Interacts with WT1. In terms of tissue distribution, detected in fetal and adult kidney, brain and spleen.

The protein localises to the cytoplasm. The protein resides in the cell membrane. It is found in the nucleus. In terms of biological role, regulator of the canonical Wnt signaling pathway. Acts by specifically binding phosphatidylinositol 4,5-bisphosphate (PtdIns(4,5)P2), translocating to the cell membrane and interacting with key regulators of the canonical Wnt signaling pathway, such as components of the beta-catenin destruction complex. Acts both as a positive and negative regulator of the Wnt signaling pathway, depending on the context: acts as a positive regulator by promoting LRP6 phosphorylation. Also acts as a negative regulator by acting as a scaffold protein for the beta-catenin destruction complex and promoting stabilization of Axin at the cell membrane. Promotes CTNNB1 ubiquitination and degradation. Involved in kidney development. The sequence is that of APC membrane recruitment protein 1 (AMER1) from Homo sapiens (Human).